The sequence spans 357 residues: Protein XRP2 (357 aa).

The segment covering 1 to 11 (MGCFFSKRRKP) has biased composition (basic residues). Positions 1 to 39 (MGCFFSKRRKPAQGGQQQGASQEPAAGEEKAPQYSWDQR) are disordered. Residue Gly2 is the site of N-myristoyl glycine attachment. A lipid anchor (S-palmitoyl cysteine) is attached at Cys3. Positions 12-25 (AQGGQQQGASQEPA) are enriched in low complexity. The C-CAP/cofactor C-like domain maps to 32 to 186 (PQYSWDQRAK…TWSNIHDFTP (155 aa)). Residues 105–106 (GS) and 122–125 (QQFR) contribute to the GTP site.

Belongs to the TBCC family. Myristoylated on Gly-2; which may be required for membrane targeting. Post-translationally, palmitoylated on Cys-3; which may be required for plasma membrane targeting.

The protein resides in the cell membrane. Functionally, acts as a GTPase-activating protein (GAP) for tubulin in concert with tubulin-specific chaperone C, but does not enhance tubulin heterodimerization. Acts as a GTPase-activating protein. May act as guanine nucleotide dissociation inhibitor towards ADP-ribosylation factor-like proteins. The sequence is that of Protein XRP2 (RP2) from Gallus gallus (Chicken).